The primary structure comprises 177 residues: MSKQVEIFTDGACSGNPGPGGWGAILRFNGTTKELSGGEAETTNNRMELLAAISALNALKEPCTVELHTDSKYVMDGISKWIHGWKKNGWKTADKKPVKNGELWQALDEANRRHKVTWNWVKGHAGHTENERADELAREGMAPFKKGSFKPAASAPKPDAQLKQPVATKARRSTQSY.

Positions 1-142 (MSKQVEIFTD…ADELAREGMA (142 aa)) constitute an RNase H type-1 domain. Residues D10, E48, D70, and D134 each coordinate Mg(2+). Basic and acidic residues predominate over residues 126-138 (GHTENERADELAR). The disordered stretch occupies residues 126–177 (GHTENERADELAREGMAPFKKGSFKPAASAPKPDAQLKQPVATKARRSTQSY).

The protein belongs to the RNase H family. In terms of assembly, monomer. It depends on Mg(2+) as a cofactor.

Its subcellular location is the cytoplasm. The enzyme catalyses Endonucleolytic cleavage to 5'-phosphomonoester.. Endonuclease that specifically degrades the RNA of RNA-DNA hybrids. This chain is Ribonuclease H, found in Mesorhizobium japonicum (strain LMG 29417 / CECT 9101 / MAFF 303099) (Mesorhizobium loti (strain MAFF 303099)).